Here is a 639-residue protein sequence, read N- to C-terminus: Protein zwilch homolog (639 aa).

Positions glutamine 76 to lysine 95 are enriched in basic and acidic residues. The disordered stretch occupies residues glutamine 76–threonine 116. Residues glutamate 96 to alanine 105 show a composition bias toward acidic residues.

This sequence belongs to the ZWILCH family. Component of the RZZ complex composed of rod-1, czw-1 and zwl-1. Interacts with the spindly-like protein spdl-1. Interacts with NDC80 complex component ndc-80.

It localises to the cytoplasm. The protein localises to the cell cortex. The protein resides in the chromosome. Its subcellular location is the centromere. It is found in the kinetochore. It localises to the cytoskeleton. The protein localises to the spindle. In terms of biological role, essential component of the mitotic checkpoint, which prevents cells from prematurely exiting mitosis. Required for chromosome segregation, the assembly of the dynein-dynactin and mdf-1-mdf-2 complexes onto kinetochores and spindle pole separation. Its function related to the spindle assembly machinery and kinetochore-microtubule attachments likely depends on its association in the mitotic RZZ complex. The RZZ complex recruits the spindly-like protein spdl-1 to kinetochores. To prevent irregular chromosome segregation, the complex also inhibits the attachment of the kinetochore-associated NDC80 complex to microtubules. The recruitment of spdl-1 to kinetochores relieves this inhibition. Required for embryonic development. In Caenorhabditis briggsae, this protein is Protein zwilch homolog (zwl-1).